The chain runs to 386 residues: RNA polymerase sigma factor SigA (386 aa).

Residues 154 to 224 form a sigma-70 factor domain-2 region; that stretch reads LAEANLRLVV…TRAIADQART (71 aa). The Interaction with polymerase core subunit RpoC signature appears at 178–181; that stretch reads DLIQ. The sigma-70 factor domain-3 stretch occupies residues 233–309; the sequence is ETINKLIRVQ…DDVIESPVDY (77 aa). The interval 322–375 is sigma-70 factor domain-4; sequence VMDTLTDREENVLRMRFGLDDGRMHTLEDVGKQFKVTRERIRQIEAKAIKKLRH. The H-T-H motif DNA-binding region spans 348–367; that stretch reads LEDVGKQFKVTRERIRQIEA.

Belongs to the sigma-70 factor family. RpoD/SigA subfamily. As to quaternary structure, interacts transiently with the RNA polymerase catalytic core.

It is found in the cytoplasm. Functionally, sigma factors are initiation factors that promote the attachment of RNA polymerase to specific initiation sites and are then released. This sigma factor is the primary sigma factor during exponential growth. In Lactococcus lactis subsp. lactis (strain IL1403) (Streptococcus lactis), this protein is RNA polymerase sigma factor SigA.